We begin with the raw amino-acid sequence, 227 residues long: ATP-dependent dethiobiotin synthetase BioD (227 aa).

13–18 provides a ligand contact to ATP; the sequence is NIGKTI. Threonine 17 lines the Mg(2+) pocket. Residue lysine 38 is part of the active site. Substrate is bound at residue serine 42. Residues aspartate 55, 117-120, 177-178, 206-208, and asparagine 213 contribute to the ATP site; these read EGFG, NH, and PFI. Residues aspartate 55 and glutamate 117 each contribute to the Mg(2+) site.

It belongs to the dethiobiotin synthetase family. As to quaternary structure, homodimer. Mg(2+) serves as cofactor.

It is found in the cytoplasm. The catalysed reaction is (7R,8S)-7,8-diammoniononanoate + CO2 + ATP = (4R,5S)-dethiobiotin + ADP + phosphate + 3 H(+). It participates in cofactor biosynthesis; biotin biosynthesis; biotin from 7,8-diaminononanoate: step 1/2. Its function is as follows. Catalyzes a mechanistically unusual reaction, the ATP-dependent insertion of CO2 between the N7 and N8 nitrogen atoms of 7,8-diaminopelargonic acid (DAPA, also called 7,8-diammoniononanoate) to form a ureido ring. This is ATP-dependent dethiobiotin synthetase BioD from Wigglesworthia glossinidia brevipalpis.